Here is a 114-residue protein sequence, read N- to C-terminus: UPF0342 protein lp_1415 (114 aa).

The protein belongs to the UPF0342 family.

This Lactiplantibacillus plantarum (strain ATCC BAA-793 / NCIMB 8826 / WCFS1) (Lactobacillus plantarum) protein is UPF0342 protein lp_1415.